The chain runs to 386 residues: DNA-directed RNA polymerase subunit Rpo1C (386 aa).

Belongs to the RNA polymerase beta' chain family. In terms of assembly, part of the RNA polymerase complex.

The protein resides in the cytoplasm. It carries out the reaction RNA(n) + a ribonucleoside 5'-triphosphate = RNA(n+1) + diphosphate. DNA-dependent RNA polymerase (RNAP) catalyzes the transcription of DNA into RNA using the four ribonucleoside triphosphates as substrates. Forms part of the jaw domain. This chain is DNA-directed RNA polymerase subunit Rpo1C, found in Methanococcus maripaludis (strain C7 / ATCC BAA-1331).